Reading from the N-terminus, the 529-residue chain is Bifunctional purine biosynthesis protein PurH (529 aa).

In terms of domain architecture, MGS-like spans 1-148 (MQQRRPVRRA…KNHKDVAIVV (148 aa)).

The protein belongs to the PurH family.

The enzyme catalyses (6R)-10-formyltetrahydrofolate + 5-amino-1-(5-phospho-beta-D-ribosyl)imidazole-4-carboxamide = 5-formamido-1-(5-phospho-D-ribosyl)imidazole-4-carboxamide + (6S)-5,6,7,8-tetrahydrofolate. It catalyses the reaction IMP + H2O = 5-formamido-1-(5-phospho-D-ribosyl)imidazole-4-carboxamide. Its pathway is purine metabolism; IMP biosynthesis via de novo pathway; 5-formamido-1-(5-phospho-D-ribosyl)imidazole-4-carboxamide from 5-amino-1-(5-phospho-D-ribosyl)imidazole-4-carboxamide (10-formyl THF route): step 1/1. It functions in the pathway purine metabolism; IMP biosynthesis via de novo pathway; IMP from 5-formamido-1-(5-phospho-D-ribosyl)imidazole-4-carboxamide: step 1/1. This is Bifunctional purine biosynthesis protein PurH from Salmonella heidelberg (strain SL476).